We begin with the raw amino-acid sequence, 158 residues long: uncharacterized protein (158 aa).

It is found in the mitochondrion. This is an uncharacterized protein from Arabidopsis thaliana (Mouse-ear cress).